The following is a 274-amino-acid chain: Formamidopyrimidine-DNA glycosylase (274 aa).

The active-site Schiff-base intermediate with DNA is the Pro2. Catalysis depends on Glu3, which acts as the Proton donor. The active-site Proton donor; for beta-elimination activity is Lys57. DNA is bound by residues His92, Arg111, and Lys152. Residues 237-271 (QVYGRKGEECNDCGSIIEAKVIGQRNSFYCPKCQR) form an FPG-type zinc finger. The active-site Proton donor; for delta-elimination activity is the Arg261.

This sequence belongs to the FPG family. In terms of assembly, monomer. Requires Zn(2+) as cofactor.

It carries out the reaction Hydrolysis of DNA containing ring-opened 7-methylguanine residues, releasing 2,6-diamino-4-hydroxy-5-(N-methyl)formamidopyrimidine.. The catalysed reaction is 2'-deoxyribonucleotide-(2'-deoxyribose 5'-phosphate)-2'-deoxyribonucleotide-DNA = a 3'-end 2'-deoxyribonucleotide-(2,3-dehydro-2,3-deoxyribose 5'-phosphate)-DNA + a 5'-end 5'-phospho-2'-deoxyribonucleoside-DNA + H(+). Its function is as follows. Involved in base excision repair of DNA damaged by oxidation or by mutagenic agents. Acts as a DNA glycosylase that recognizes and removes damaged bases. Has a preference for oxidized purines, such as 7,8-dihydro-8-oxoguanine (8-oxoG). Has AP (apurinic/apyrimidinic) lyase activity and introduces nicks in the DNA strand. Cleaves the DNA backbone by beta-delta elimination to generate a single-strand break at the site of the removed base with both 3'- and 5'-phosphates. This Glaesserella parasuis serovar 5 (strain SH0165) (Haemophilus parasuis) protein is Formamidopyrimidine-DNA glycosylase.